Here is a 746-residue protein sequence, read N- to C-terminus: H(+)/Cl(-) exchange transporter 5 (746 aa).

Over 1–54 (MDFLEEPIPGVGTYDDFNTIDWVREKSRDRDRHREITNRSKESTWALIHSVSDA) the chain is Cytoplasmic. 2 consecutive transmembrane segments (helical) span residues 55–92 (FSGW…ICTE) and 138–161 (VNYF…VKVF). A Selectivity filter part_1 motif is present at residues 167–171 (GSGIP). Ser168 is a chloride binding site. An intramembrane region (helical) is located at residues 170–177 (IPEIKTIL). 2 helical membrane-spanning segments follow: residues 186–205 (LGKW…VSSG) and 211–230 (EGPL…HCFN). The short motif at 209 to 213 (GKEGP) is the Selectivity filter part_2 element. Intramembrane regions (helical) lie at residues 242 to 254 (VLSA…VSVA) and 258 to 266 (PIGGVLFSL). A run of 5 helical transmembrane segments spans residues 278–296 (LWRS…RSIN), 319–344 (LVPF…IAWC), 352–372 (LGKY…ILAF), 428–448 (MWQL…TFGM), and 453–472 (GLFI…LGVG). A Selectivity filter part_3 motif is present at residues 453-457 (GLFIP). Phe455 is a chloride binding site. The segment at residues 500–514 (GLYAMVGAAACLGGV) is an intramembrane region (helical). An intramembrane region (note=Loop between two helices) is located at residues 515–517 (TRM). The helical intramembrane region spans 518–529 (TVSLVVIMFELT). The segment at residues 530-534 (GGLEY) is an intramembrane region (note=Loop between two helices). A helical membrane pass occupies residues 535 to 552 (IVPLMAAAMTSKWVADAL). The Cytoplasmic segment spans residues 553-746 (GREGIYDAHI…NQDPDSILFN (194 aa)). Residue Tyr558 participates in chloride binding. 2 consecutive CBS domains span residues 586-650 (MKPR…ARKE) and 682-742 (ILDL…DPDS). ATP contacts are provided by residues Thr596, 617–619 (YSG), and 724–727 (TKKD).

This sequence belongs to the chloride channel (TC 2.A.49) family. ClC-5/CLCN5 subfamily. As to quaternary structure, interacts with NEDD4 and NEDD4L. Post-translationally, ubiquitinated by NEDD4L in the presence of albumin; which promotes endocytosis and proteasomal degradation. Detected in duodenum, jejunum and ileum. Detected in crypt and villus regions of the epithelium of the small intestine.

It is found in the golgi apparatus membrane. Its subcellular location is the endosome membrane. The protein resides in the cell membrane. It carries out the reaction 2 chloride(in) + H(+)(out) = 2 chloride(out) + H(+)(in). In terms of biological role, proton-coupled chloride transporter. Functions as antiport system and exchanges chloride ions against protons. Important for normal acidification of the endosome lumen. May play an important role in renal tubular function. The CLC channel family contains both chloride channels and proton-coupled anion transporters that exchange chloride or another anion for protons. The absence of conserved gating glutamate residues is typical for family members that function as channels. The sequence is that of H(+)/Cl(-) exchange transporter 5 (CLCN5) from Cavia porcellus (Guinea pig).